Here is a 274-residue protein sequence, read N- to C-terminus: Putative homeobox protein Meis3-like 1 (274 aa).

Residues 12–65 form the MEIS N-terminal domain; the sequence is GGDVCSSDSFNEDNTAFAKQVRSERPFFSSNPELDNLMIQAIQVLRFHLLELEK. Disordered stretches follow at residues 108 to 167 and 228 to 248; these read DSGS…KRGI and NRTG…GYTE. Positions 123-135 are enriched in polar residues; the sequence is GLASQSGDNSSDQ. A DNA-binding region (homeobox) is located at residues 161–223; sequence RNKKRGIFPK…NARRRIVQPM (63 aa).

The protein belongs to the TALE/MEIS homeobox family.

The protein resides in the nucleus. This Homo sapiens (Human) protein is Putative homeobox protein Meis3-like 1 (MEIS3P1).